A 355-amino-acid polypeptide reads, in one-letter code: Ribosomal RNA large subunit methyltransferase M (355 aa).

S-adenosyl-L-methionine-binding positions include Ser191, 224-227 (APGG), Asp243, Asp263, and Asp279. Lys308 functions as the Proton acceptor in the catalytic mechanism.

This sequence belongs to the class I-like SAM-binding methyltransferase superfamily. RNA methyltransferase RlmE family. RlmM subfamily. Monomer.

It localises to the cytoplasm. The catalysed reaction is cytidine(2498) in 23S rRNA + S-adenosyl-L-methionine = 2'-O-methylcytidine(2498) in 23S rRNA + S-adenosyl-L-homocysteine + H(+). Functionally, catalyzes the 2'-O-methylation at nucleotide C2498 in 23S rRNA. This Stenotrophomonas maltophilia (strain K279a) protein is Ribosomal RNA large subunit methyltransferase M.